Consider the following 214-residue polypeptide: Adenylate kinase (214 aa).

ATP is bound at residue 10–15; sequence GAGKGT. The interval 30-59 is NMP; the sequence is STGDMLRAAVKAGTPLGLEAKKVMDAGQLV. Residues threonine 31, arginine 36, 57–59, 85–88, and glutamine 92 each bind AMP; these read QLV and GFPR. The interval 122-159 is LID; it reads GRRVHPGSGRVYHVVFNPPKVEGKDDVTGEDLVIRPDD. Residues arginine 123 and 132-133 contribute to the ATP site; that span reads VY. AMP is bound by residues arginine 156 and arginine 167. Glutamine 200 contributes to the ATP binding site.

This sequence belongs to the adenylate kinase family. In terms of assembly, monomer.

The protein resides in the cytoplasm. The enzyme catalyses AMP + ATP = 2 ADP. It functions in the pathway purine metabolism; AMP biosynthesis via salvage pathway; AMP from ADP: step 1/1. Its function is as follows. Catalyzes the reversible transfer of the terminal phosphate group between ATP and AMP. Plays an important role in cellular energy homeostasis and in adenine nucleotide metabolism. The protein is Adenylate kinase of Shewanella amazonensis (strain ATCC BAA-1098 / SB2B).